Here is a 247-residue protein sequence, read N- to C-terminus: Exosome complex component Rrp4 (247 aa).

The S1 motif domain maps to 75 to 148; it reads DDLVIGIVEN…RDPVITVKGK (74 aa). Residues 154-220 form the KH domain; the sequence is TEGVVVDVKP…QAIKLIELKA (67 aa).

This sequence belongs to the RRP4 family. As to quaternary structure, component of the archaeal exosome complex. Forms a trimer of Rrp4 and/or Csl4 subunits. The trimer associates with a hexameric ring-like arrangement composed of 3 Rrp41-Rrp42 heterodimers.

The protein resides in the cytoplasm. Functionally, non-catalytic component of the exosome, which is a complex involved in RNA degradation. Increases the RNA binding and the efficiency of RNA degradation. Confers strong poly(A) specificity to the exosome. This Thermosphaera aggregans (strain DSM 11486 / M11TL) protein is Exosome complex component Rrp4.